The primary structure comprises 528 residues: GMP synthase [glutamine-hydrolyzing] (528 aa).

Residues 13–204 (SILILDFGSQ…VYSIAKCKAD (192 aa)) enclose the Glutamine amidotransferase type-1 domain. Catalysis depends on cysteine 90, which acts as the Nucleophile. Catalysis depends on residues histidine 178 and glutamate 180. The GMPS ATP-PPase domain occupies 205–403 (WTTETFLEET…LGLPDEIIKR (199 aa)). 232–238 (SGGVDSS) is a binding site for ATP.

In terms of assembly, homodimer.

It carries out the reaction XMP + L-glutamine + ATP + H2O = GMP + L-glutamate + AMP + diphosphate + 2 H(+). It functions in the pathway purine metabolism; GMP biosynthesis; GMP from XMP (L-Gln route): step 1/1. In terms of biological role, catalyzes the synthesis of GMP from XMP. This Prochlorococcus marinus subsp. pastoris (strain CCMP1986 / NIES-2087 / MED4) protein is GMP synthase [glutamine-hydrolyzing].